A 518-amino-acid chain; its full sequence is Anthranilate synthase component 1 (518 aa).

L-tryptophan-binding positions include S41 and 291–293 (PYM). A chorismate-binding site is contributed by 328-329 (GS). Position 361 (E361) interacts with Mg(2+). Residues Y449, R469, 483–485 (GCG), and G485 each bind chorismate. E498 provides a ligand contact to Mg(2+).

This sequence belongs to the anthranilate synthase component I family. As to quaternary structure, heterotetramer consisting of two non-identical subunits: a beta subunit (TrpG) and a large alpha subunit (TrpE). Mg(2+) is required as a cofactor.

The catalysed reaction is chorismate + L-glutamine = anthranilate + pyruvate + L-glutamate + H(+). It functions in the pathway amino-acid biosynthesis; L-tryptophan biosynthesis; L-tryptophan from chorismate: step 1/5. With respect to regulation, feedback inhibited by tryptophan. Functionally, part of a heterotetrameric complex that catalyzes the two-step biosynthesis of anthranilate, an intermediate in the biosynthesis of L-tryptophan. In the first step, the glutamine-binding beta subunit (TrpG) of anthranilate synthase (AS) provides the glutamine amidotransferase activity which generates ammonia as a substrate that, along with chorismate, is used in the second step, catalyzed by the large alpha subunit of AS (TrpE) to produce anthranilate. In the absence of TrpG, TrpE can synthesize anthranilate directly from chorismate and high concentrations of ammonia. The sequence is that of Anthranilate synthase component 1 (trpE) from Haemophilus influenzae (strain ATCC 51907 / DSM 11121 / KW20 / Rd).